A 170-amino-acid chain; its full sequence is RxLR effector protein PITG_07555 (170 aa).

An N-terminal signal peptide occupies residues 1–17; it reads MQAYHLLLVCMYISCSA. A RxLR-dEER motif is present at residues 50-62; the sequence is RALRTHNPDREER.

It belongs to the RxLR effector family.

The protein localises to the secreted. It localises to the host cytoplasm. The protein resides in the host nucleus. Effector that enhances P.infestans colonization of Nicotiana benthamiana leaves. The polypeptide is RxLR effector protein PITG_07555 (Phytophthora infestans (strain T30-4) (Potato late blight agent)).